Reading from the N-terminus, the 69-residue chain is Purkinje cell protein 4-like protein 1 (69 aa).

A compositionally biased stretch (polar residues) spans 1–15 (MSELNTKTSPATNQA). The disordered stretch occupies residues 1-47 (MSELNTKTSPATNQAPGPEEKGKAGSAKKTEDEEEEIDIDLTAPETE). Thr-8 is modified (phosphothreonine). Over residues 18–31 (PEEKGKAGSAKKTE) the composition is skewed to basic and acidic residues. In terms of domain architecture, IQ spans 46–69 (TEKAALAIQGKFRRFQKRKKDPSS).

The protein belongs to the PCP4 family.

The polypeptide is Purkinje cell protein 4-like protein 1 (PCP4L1) (Bos taurus (Bovine)).